Consider the following 373-residue polypeptide: Sorting nexin-21 (373 aa).

The disordered stretch occupies residues 1-107; that stretch reads MHRGTQEGAM…RSPPPDGQWG (107 aa). The segment covering 21-37 has biased composition (low complexity); that stretch reads ALAGDGPGEAAASPEAE. Positions 55 to 65 are enriched in polar residues; the sequence is SRLSGTLSFTS. The segment covering 66-81 has biased composition (acidic residues); it reads AEDDEDDEDEDDEEAG. Positions 129–246 constitute a PX domain; that stretch reads QRLLFEVTSA…DFFVLPELRR (118 aa). Positions 171, 173, 198, and 212 each coordinate a 1,2-diacyl-sn-glycero-3-phospho-(1D-myo-inositol-3-phosphate).

It belongs to the sorting nexin family. In terms of assembly, monomer. In terms of tissue distribution, highly expressed in fetus liver, but only weakly expressed in brain, skeleton muscle, smooth muscle, and cardiac muscle, kidney, and adrenal gland.

It localises to the cytoplasmic vesicle membrane. The protein localises to the early endosome membrane. Its function is as follows. Binds to membranes enriched in phosphatidylinositol 3-phosphate (PtdIns(P3)) and phosphatidylinositol 4,5-bisphosphate. May be involved in several stages of intracellular trafficking. This chain is Sorting nexin-21 (SNX21), found in Homo sapiens (Human).